We begin with the raw amino-acid sequence, 497 residues long: Dihydrolipoyl dehydrogenase (497 aa).

Residues 60-69 (EKEPSLGGTC), lysine 78, glycine 142, and 170-172 (TGS) each bind FAD. Cysteine 69 and cysteine 74 are disulfide-bonded. NAD(+) is bound by residues 207 to 214 (GAGVIGLE), glutamate 230, valine 264, and glycine 302. FAD is bound by residues aspartate 343 and 349-352 (MLAH). Histidine 475 serves as the catalytic Proton acceptor.

The protein belongs to the class-I pyridine nucleotide-disulfide oxidoreductase family. In terms of assembly, homodimer. It depends on FAD as a cofactor.

Its subcellular location is the cytoplasm. The enzyme catalyses N(6)-[(R)-dihydrolipoyl]-L-lysyl-[protein] + NAD(+) = N(6)-[(R)-lipoyl]-L-lysyl-[protein] + NADH + H(+). This chain is Dihydrolipoyl dehydrogenase, found in Manduca sexta (Tobacco hawkmoth).